Reading from the N-terminus, the 323-residue chain is Methenyltetrahydromethanopterin cyclohydrolase (323 aa).

It belongs to the MCH family.

The protein resides in the cytoplasm. It carries out the reaction 5,10-methenyl-5,6,7,8-tetrahydromethanopterin + H2O = N(5)-formyl-5,6,7,8-tetrahydromethanopterin + H(+). It functions in the pathway one-carbon metabolism; methanogenesis from CO(2); 5,10-methenyl-5,6,7,8-tetrahydromethanopterin from CO(2): step 3/3. Its function is as follows. Catalyzes the reversible interconversion of 5-formyl-H(4)MPT to methenyl-H(4)MPT(+). The protein is Methenyltetrahydromethanopterin cyclohydrolase of Methanococcus maripaludis (strain C7 / ATCC BAA-1331).